The following is a 608-amino-acid chain: Glutamyl-tRNA(Gln) amidotransferase subunit E (608 aa).

The segment at 402–422 (EETRGANPDGTTRFLRPRPGA) is disordered.

It belongs to the GatB/GatE family. GatE subfamily. Heterodimer of GatD and GatE.

It carries out the reaction L-glutamyl-tRNA(Gln) + L-glutamine + ATP + H2O = L-glutaminyl-tRNA(Gln) + L-glutamate + ADP + phosphate + H(+). Functionally, allows the formation of correctly charged Gln-tRNA(Gln) through the transamidation of misacylated Glu-tRNA(Gln) in organisms which lack glutaminyl-tRNA synthetase. The reaction takes place in the presence of glutamine and ATP through an activated gamma-phospho-Glu-tRNA(Gln). The GatDE system is specific for glutamate and does not act on aspartate. The protein is Glutamyl-tRNA(Gln) amidotransferase subunit E of Pyrobaculum calidifontis (strain DSM 21063 / JCM 11548 / VA1).